A 160-amino-acid chain; its full sequence is MPSFDIVSEVEMNEAKNAVDNANRELETRFDFRGVDASIELNDKVIKLKAEADSQVIQLFDILASKISKRGMDVSSLELQDISRAGKNVFRNVGLKQGIEKEMAKKIVKAIKDSKVKVQAAIQGEEVRVTGKKRDDLQEAMQVVRSADLGQPFQFKNFRD.

This sequence belongs to the YajQ family.

In terms of biological role, nucleotide-binding protein. This Pseudoalteromonas translucida (strain TAC 125) protein is Nucleotide-binding protein PSHAa2277.